The chain runs to 105 residues: Prokineticin-1 (105 aa).

An N-terminal signal peptide occupies residues 1–19 (MRGAVHIFIMLLLATASDC). 5 disulfide bridges follow: C26–C38, C32–C50, C37–C78, C60–C86, and C80–C96.

This sequence belongs to the AVIT (prokineticin) family. As to expression, highly expressed in liver and ovary and weakly expressed in testis and placenta. Expressed in mucosa and mesenchyme of embryonic gut during enteric nervous system development (at protein level). Predominantly expressed in kidney and liver. Also expressed in lung, ovary, placenta and testis. In fetal liver, is restricted to and highly expressed in hepatocytes. In adult kidney, expression is restricted to the endothelial tubule cells. In placenta, expressed throughout gestation.

The protein resides in the secreted. Potently contracts gastrointestinal (GI) smooth muscle. Induces proliferation, migration and fenestration (the formation of membrane discontinuities) in capillary endothelial cells. Induces proliferation and differentiation, but not migration, of enteric neural crest cells. Directly influences neuroblastoma progression by promoting the proliferation and migration of neuroblastoma cells. Positively regulates PTGS2 expression and prostaglandin synthesis. May play a role in placentation. May play a role in normal and pathological testis angiogenesis. The sequence is that of Prokineticin-1 from Mus musculus (Mouse).